The following is a 185-amino-acid chain: MKLLGISGTLVGTKTCILVEQVLVEAKRICPEVDIQLLDLKDYQVEFCDGRQQSSYNEDTQKVIELVSVADCYVIGTPIFQGSITGALKNLFDLISPQALRHKVMGFVANGGTYQHYLVIENQLKPIASFFRAFVAPGSVYAHTDHFNEKNELVDPEVRERVAQLAWEVVHMHWSLKSGGVHAHR.

As to quaternary structure, anthranilate 3-monooxygenase consists of a reductase component (GTNG_3158) and an oxygenase component HpaH.

It carries out the reaction FADH2 + NAD(+) = FAD + NADH + 2 H(+). The enzyme catalyses FADH2 + NADP(+) = FAD + NADPH + 2 H(+). Involved in the pathway of tryptophan degradation. Reduces FAD/FMN to FADH(2)/FMNH(2), which are subsequently used for the hydroxylation of anthranilate. It can reduce either FAD or flavin mononucleotide (FMN) but prefers FAD. The enzyme has a slight preference for NADPH as acceptor. The sequence is that of NAD(P)H-dependent FAD/FMN reductase GTNG_3158 from Geobacillus thermodenitrificans (strain NG80-2).